Reading from the N-terminus, the 104-residue chain is Flagellar hook-basal body complex protein FliE (104 aa).

This sequence belongs to the FliE family.

Its subcellular location is the bacterial flagellum basal body. The sequence is that of Flagellar hook-basal body complex protein FliE from Escherichia fergusonii (strain ATCC 35469 / DSM 13698 / CCUG 18766 / IAM 14443 / JCM 21226 / LMG 7866 / NBRC 102419 / NCTC 12128 / CDC 0568-73).